The sequence spans 152 residues: SsrA-binding protein (152 aa).

Belongs to the SmpB family.

It is found in the cytoplasm. In terms of biological role, required for rescue of stalled ribosomes mediated by trans-translation. Binds to transfer-messenger RNA (tmRNA), required for stable association of tmRNA with ribosomes. tmRNA and SmpB together mimic tRNA shape, replacing the anticodon stem-loop with SmpB. tmRNA is encoded by the ssrA gene; the 2 termini fold to resemble tRNA(Ala) and it encodes a 'tag peptide', a short internal open reading frame. During trans-translation Ala-aminoacylated tmRNA acts like a tRNA, entering the A-site of stalled ribosomes, displacing the stalled mRNA. The ribosome then switches to translate the ORF on the tmRNA; the nascent peptide is terminated with the 'tag peptide' encoded by the tmRNA and targeted for degradation. The ribosome is freed to recommence translation, which seems to be the essential function of trans-translation. The chain is SsrA-binding protein from Persephonella marina (strain DSM 14350 / EX-H1).